A 160-amino-acid chain; its full sequence is NAD(P)H-quinone oxidoreductase subunit I, chloroplastic (160 aa).

4Fe-4S ferredoxin-type domains lie at 55 to 84 (GRIH…VDWK) and 95 to 124 (LNYS…MTEE). [4Fe-4S] cluster is bound by residues C64, C67, C70, C74, C104, C107, C110, and C114.

The protein belongs to the complex I 23 kDa subunit family. In terms of assembly, NDH is composed of at least 16 different subunits, 5 of which are encoded in the nucleus. It depends on [4Fe-4S] cluster as a cofactor.

Its subcellular location is the plastid. It is found in the chloroplast thylakoid membrane. The catalysed reaction is a plastoquinone + NADH + (n+1) H(+)(in) = a plastoquinol + NAD(+) + n H(+)(out). It catalyses the reaction a plastoquinone + NADPH + (n+1) H(+)(in) = a plastoquinol + NADP(+) + n H(+)(out). In terms of biological role, NDH shuttles electrons from NAD(P)H:plastoquinone, via FMN and iron-sulfur (Fe-S) centers, to quinones in the photosynthetic chain and possibly in a chloroplast respiratory chain. The immediate electron acceptor for the enzyme in this species is believed to be plastoquinone. Couples the redox reaction to proton translocation, and thus conserves the redox energy in a proton gradient. The sequence is that of NAD(P)H-quinone oxidoreductase subunit I, chloroplastic from Cucumis sativus (Cucumber).